Reading from the N-terminus, the 284-residue chain is Tropomyosin Pen a 1.0102 (284 aa).

The interval 1-51 (MDAIKKKMQAMKLEKDNAMDRADTLEQQNKEANNRAEKSEEEVHNLQKRMQ) is disordered. Residues 1–273 (MDAIKKKMQA…KEKYKSITDE (273 aa)) adopt a coiled-coil conformation. Over residues 12–45 (KLEKDNAMDRADTLEQQNKEANNRAEKSEEEVHN) the composition is skewed to basic and acidic residues. IgE-binding regions lie at residues 43 to 57 (VHNL…ENDL), 85 to 105 (VAAL…SEER), 133 to 153 (RSLS…EARF), 187 to 202 (ESKI…VVGN), 247 to 284 (QKLQ…LSGY), 249 to 260 (LQKEVDRLEDEL), and 266 to 281 (KYKS…FSEL).

Belongs to the tropomyosin family. As to quaternary structure, homodimer.

In terms of biological role, tropomyosin, in association with the troponin complex, plays a central role in the calcium dependent regulation of muscle contraction. This Penaeus aztecus (Brown shrimp) protein is Tropomyosin Pen a 1.0102.